The chain runs to 336 residues: NEDD4 family-interacting protein 2 (336 aa).

Disordered stretches follow at residues 1–24 and 37–156; these read MARR…RGAP and SAAA…SITV. Over 1–231 the chain is Cytoplasmic; that stretch reads MARRRSQRVC…ADQLRVGNDG (231 aa). Residues 37–48 show a composition bias toward low complexity; the sequence is SAAAAGATGSEE. Over residues 78 to 99 the composition is skewed to basic and acidic residues; that stretch reads EHGEDSLSRKPDPEPGRMDHHQ. The segment at 148-151 is interaction with NEDD4; that stretch reads PPPY. Residues 148-151 carry the PPxY motif 1 motif; it reads PPPY. Phosphotyrosine; by SRC occurs at positions 151, 167, 171, and 177. 2 consecutive short sequence motifs (PPxY motif) follow at residues 174 to 177 and 184 to 186; these read PPPY and PTY. Residues 232–252 traverse the membrane as a helical segment; it reads IFMLAFFMAFIFNWLGFCLSF. Residues 253 to 257 are Extracellular-facing; it reads CITNT. The helical transmembrane segment at 258 to 278 threads the bilayer; it reads IAGRYGAICGFGLSLIKWILI. The Cytoplasmic segment spans residues 279 to 287; the sequence is VRFSDYFTG. A helical membrane pass occupies residues 288 to 308; sequence YFNGQYWLWWIFLVLGLLLFF. At 309 to 336 the chain is on the extracellular side; the sequence is RGFVNYLKVRNMSESMAAAHRTRYFFLL.

In terms of assembly, forms heterodimers with NDFIP1. Interacts with HECT domain-containing E3 ubiquitin-protein ligases, including NEDD4. Interacts with NEDD4L. Interacts with PTEN. When phosphorylated at Tyr-167, interacts with SRC and LYN SH2 domain. May thus act as a scaffold that recruits SRC to NDFIP1, enhancing NDFIP1 phosphorylation. Interacts with SLC11A2/DMT1. May interact with phosphorylated EGFR. Interacts with KCNH2. In terms of processing, ubiquitinated by NEDD4 and ITCH. Also ubiquitinated by NEDD4L. Ubiquitination by NEDD4 or NEDD4L does not affect turnover. Undergoes transient tyrosine-phosphorylation following EGF stimulation, most probably catalyzed by SRC. Phosphorylation on Tyr-151, Tyr-171 and Tyr-177 are dependent on the phosphorylation on Tyr-167. Also phosphorylated by LYN and FYN. Expressed in brain, lung, heart, skeletal muscle, kidney, liver and placenta.

The protein localises to the endosome membrane. Its subcellular location is the golgi apparatus membrane. It is found in the endosome. The protein resides in the multivesicular body membrane. Activates HECT domain-containing E3 ubiquitin-protein ligases, including ITCH, NEDD4, NEDD4L, SMURF2, WWP1 and WWP2, and consequently modulates the stability of their targets. As a result, may control many cellular processes. Recruits ITCH, NEDD4 and SMURF2 to endosomal membranes. Negatively regulates KCNH2 potassium channel activity by decreasing its cell-surface expression and interfering with channel maturation through recruitment of NEDD4L to the Golgi apparatus and multivesicular body where it mediates KCNH2 degradation. May modulate EGFR signaling. Together with NDFIP1, limits the cytokine signaling and expansion of effector Th2 T-cells by promoting degradation of JAK1, probably by ITCH- and NEDD4L-mediated ubiquitination. This Homo sapiens (Human) protein is NEDD4 family-interacting protein 2 (NDFIP2).